Here is a 200-residue protein sequence, read N- to C-terminus: Ras-related protein Rab-10 (200 aa).

The GTP site is built by serine 18, glycine 19, valine 20, glycine 21, lysine 22, threonine 23, cysteine 24, asparagine 35, threonine 36, serine 40, and threonine 41. Threonine 23 lines the Mg(2+) pocket. Short sequence motifs (switch) lie at residues 32–46 (DAFN…GIDF) and 64–81 (DTAG…YYRG). The Mg(2+) site is built by threonine 41 and aspartate 64. GTP contacts are provided by glycine 67, asparagine 122, lysine 123, aspartate 125, methionine 126, serine 152, alanine 153, and lysine 154. The tract at residues 181–200 (RENVDISTTGGGTGLKKCCS) is disordered. S-geranylgeranyl cysteine attachment occurs at residues cysteine 198 and cysteine 199.

Belongs to the small GTPase superfamily. Rab family. It depends on Mg(2+) as a cofactor.

The protein resides in the cytoplasmic vesicle membrane. It localises to the golgi apparatus. The protein localises to the trans-Golgi network membrane. It is found in the endosome membrane. Its subcellular location is the recycling endosome membrane. The protein resides in the cytoplasmic vesicle. It localises to the phagosome membrane. The protein localises to the cell projection. It is found in the cilium. Its subcellular location is the endoplasmic reticulum membrane. It carries out the reaction GTP + H2O = GDP + phosphate + H(+). With respect to regulation, regulated by guanine nucleotide exchange factors (GEFs) which promote the exchange of bound GDP for free GTP. Regulated by GTPase activating proteins (GAPs) which increase the GTP hydrolysis activity. Inhibited by GDP dissociation inhibitors (GDIs) which prevent Rab-GDP dissociation. Its function is as follows. The small GTPases Rab are key regulators of intracellular membrane trafficking, from the formation of transport vesicles to their fusion with membranes. Rabs cycle between an inactive GDP-bound form and an active GTP-bound form that is able to recruit to membranes different set of downstream effectors directly responsible for vesicle formation, movement, tethering and fusion. That Rab is mainly involved in the biosynthetic transport of proteins from the Golgi to the plasma membrane. Also plays a specific role in asymmetric protein transport to the plasma membrane within the polarized neuron and epithelial cells. In neurons, it is involved in axonogenesis through regulation of vesicular membrane trafficking toward the axonal plasma membrane while in epithelial cells, it regulates transport from the Golgi to the basolateral membrane. Moreover, may play a role in the basolateral recycling pathway and in phagosome maturation. Finally, may play a role in endoplasmic reticulum dynamics and morphology controlling tubulation along microtubules and tubules fusion. May participate in the export of neosynthesized proteins through a Rab-dependent endosomal export route. The polypeptide is Ras-related protein Rab-10 (Diplobatis ommata (Ocellated electric ray)).